The primary structure comprises 2375 residues: MVALSLKICVRHCNVVKTMQFEPSTAVYDACRVIRERVPEAQTGQASDYGLFLSDEDPRKGIWLEAGRTLDYYMLRNGDILEYKKKQRPQKIRMLDGSVKTVMVDDSKTVGELLVTICSRIGITNYEEYSLIQETIEEKKEEGTGTLKKDRTLLRDERKMEKLKAKLHTDDDLNWLDHSRTFREQGVDENETLLLRRKFFYSDQNVDSRDPVQLNLLYVQARDDILNGSHPVSFEKACEFGGFQAQIQFGPHVEHKHKPGFLDLKEFLPKEYIKQRGAEKRIFQEHKNCGEMSEIEAKVKYVKLARSLRTYGVSFFLVKEKMKGKNKLVPRLLGITKDSVMRVDEKTKEVLQEWPLTTVKRWAASPKSFTLDFGEYQESYYSVQTTEGEQISQLIAGYIDIILKKKQSKDRFGLEGDEESTMLEESVSPKKRSTILQQQFNRTGKAEHGSVALPAVMRSGSSGPETFNVGSMPSPQQQVMVGQMHRGHMPPLTSAQQALMGTINTSMHAVQQAQDDLSELDSLPPLGQDMASRVWVQNKVDESKHEIHSQVDAITAGTASVVNLTAGDPADTDYTAVGCAITTISSNLTEMSKGVKLLAALMDDDVGSGEDLLRAARTLAGAVSDLLKAVQPTSGEPRQTVLTAAGSIGQASGDLLRQIGENETDERFQDVLMSLAKAVANAAAMLVLKAKNVAQVAEDTVLQNRVIAAATQCALSTSQLVACAKVVSPTISSPVCQEQLIEAGKLVDRSVENCVRACQAATSDSELLKQVSAAASVVSQALHDLLQHVRQFASRGEPIGRYDQATDTIMCVTESIFSSMGDAGEMVRQARVLAQATSDLVNAMRSDAEAEIDMENSKKLLAAAKLLADSTARMVEAAKGAAANPENEDQQQRLREAAEGLRVATNAAAQNAIKKKIVNRLEVAAKQAAAAATQTIAASQNAAISNKNPSAQQQLVQSCKAVADHIPQLVQGVRGSQAQAEDLSAQLALIISSQNFLQPGSKMVSSAKAAVPTVSDQAAAMQLSQCAKNLATSLAELRTASQKAHEACGPMEIDSALNTVQTLKNELQDAKMAAAESQLKPLPGETLEKCAQDLGSTSKGVGSSMAQLLTCAAQGNEHYTGVAARETAQALKTLAQAARGVAASTNDPEAAHAMLDSARDVMEGSAMLIQEAKQALIAPGDTESQQRLAQVAKAVSHSLNNCVNCLPGQKDVDVALKSIGEASKKLLVDSLPPSTKPFQEAQSELNQAAADLNQSAGEVVHATRGQSGELAAASGKFSDDFDEFLDAGIEMAGQAQTKEDQMQVIGNLKNISMASSKLLLAAKSLSVDPGAPNAKNLLAAAARAVTESINQLIMLCTQQAPGQKECDNALRELETVKGMLENPNEPVSDLSYFDCIESVMENSKVLGESMAGISQNAKTGDLPAFGECVGIASKALCGLTEAAAQAAYLVGISDPNSQAGHQGLVDPIQFARANQAIQMACQNLVDPGSSPSQVLSAATIVAKHTSALCNACRIASSKTANPVAKRHFVQSAKEVANSTANLVKTIKALDGDFSEDNRNKCRIATTPLIEAVENLTAFASNPEFASIPAQISSEGSQAQEPILVSAKTMLESSSYLIRTARSLAINPKDPPTWSVLAGHSHTVSDSIKSLITSIRDKAPGQRECDYSIDGINRCIRDIEQASLAAVSQSLATRDDISVEALQEQLTSVVQEIGHLIDPIATAARGEAAQLGHKVTQLASYFEPLILAAVGVASKMLDHQQQMTVLDQTKTLAESALQMLYAAKEGGGNPKAVHTAPEPKGTFVDYQTTVVKYSKAIAVTAQEMIGFQIRTRVQDLGHGCIFLVQKAGALQVCPTDSYTKRELIECARSVTEKVSLVLSALQAGNKGTQACITAATAVSGIIADLDTTIMFATAGTLNAENGETFADHRENILKTAKALVEDTKLLVSGAASTPDKLAQAAQSSAATITQLAEVVKLGAASLGSNDPETQVVLINAIKDVAKALSDLIGATKGAASKPADDPSMYQLKGAAKVMVTNVTSLLKTVKAVEDEATRGTRALEATIEYIKQELTVFQSKDIPEKTSSPEESIRMTKGITMATAKAVAAGNSCRQEDVIATANLSRKAVSDMLIACKQASFYPDVSEEVRTRALRYGTECTLGYLDLLEHVLVILQKPTPELKHQLAAFSKRVAGAVTELIQAAEAMKGTEWVDPEDPTVIAETELLGAAASIEAAAKKLEQLKPRAKPKQADETLDFEEQILEAAKSIAAATSALVKSASAAQRELVAQGKVGSIPANAADDGQWSQGLISAARMVAAATSSLCEAANASVQGHASEEKLISSAKQVAASTAQLLVACKVKADQDSEAMKRLQAAGNAV.

The region spanning 88-406 (RPQKIRMLDG…GYIDIILKKK (319 aa)) is the FERM domain. Residues 312–406 (GVSFFLVKEK…GYIDIILKKK (95 aa)) are interaction with PIP5K1C. 4 positions are modified to phosphoserine: Ser-428, Ser-450, Ser-624, and Ser-1024. Tyr-1666 is subject to Phosphotyrosine. Residues 2205–2375 (TEWVDPEDPT…KRLQAAGNAV (171 aa)) form the I/LWEQ domain.

Interacts directly with PIP5K1C.

It localises to the cytoplasm. The protein localises to the cell junction. The protein resides in the focal adhesion. Its subcellular location is the synapse. It is found in the cell membrane. It localises to the cytoskeleton. Its function is as follows. As a major component of focal adhesion plaques that links integrin to the actin cytoskeleton, may play an important role in cell adhesion. Recruits PIP5K1C to focal adhesion plaques and strongly activates its kinase activity. This is Talin-2 (Tln2) from Mus musculus (Mouse).